The sequence spans 355 residues: S-adenosylmethionine:tRNA ribosyltransferase-isomerase (355 aa).

This sequence belongs to the QueA family. In terms of assembly, monomer.

The protein resides in the cytoplasm. It catalyses the reaction 7-aminomethyl-7-carbaguanosine(34) in tRNA + S-adenosyl-L-methionine = epoxyqueuosine(34) in tRNA + adenine + L-methionine + 2 H(+). It participates in tRNA modification; tRNA-queuosine biosynthesis. Functionally, transfers and isomerizes the ribose moiety from AdoMet to the 7-aminomethyl group of 7-deazaguanine (preQ1-tRNA) to give epoxyqueuosine (oQ-tRNA). This Pectobacterium carotovorum subsp. carotovorum (strain PC1) protein is S-adenosylmethionine:tRNA ribosyltransferase-isomerase.